The primary structure comprises 494 residues: MKKQAFSSEQYLNLQRDHILERINQFDGKLYLEFGGKMLEDFHAARVLPGYEPDNKIKLLQELKEQVEVVIAINASNIEHSKARGDLGISYDQEVLRLIDKFNELGIFVGSVVITQYAGQPAADAFRNQLEKNGIDSYLHYPIKGYPTDMDHIISPEGMGKNDYIKTSRNLIVVTAPGPGSGKLATCMSNMYHDQINGIKSGYAKFETFPVWNLPLHHPVNLAYEAATADLDDVNMIDPFHLQTYGETTVNYNRDIEIFPVLKSMLERILGKSPYASPTDMGVNMVGFAITDDEAAVEASKQEIIRRYYQTVLDFKAEKVSEAAVKKIELLMNDLGITPADRKVAVVARQKAEETGGPALAFELPNGEIVTGKNSELFGPTAAALINAIKKSADIAKEVKLIEPEVVKPIQGLKIDHLGSRNPRLHSNEILIALAITATENPDAARAMEELGNLKGSEAHSTIILTDEDKNVLRKLGINVTFDPYYQYDRLYRK.

The protein belongs to the UPF0371 family.

The polypeptide is UPF0371 protein SPJ_0333 (Streptococcus pneumoniae (strain JJA)).